The following is a 597-amino-acid chain: Elongation factor 4 (597 aa).

Residues 2–184 form the tr-type G domain; it reads DHIRNFSIIA…ALIAKVPPPK (183 aa). GTP contacts are provided by residues 14 to 19 and 131 to 134; these read DHGKST and NKID.

The protein belongs to the TRAFAC class translation factor GTPase superfamily. Classic translation factor GTPase family. LepA subfamily.

Its subcellular location is the cell inner membrane. It catalyses the reaction GTP + H2O = GDP + phosphate + H(+). Its function is as follows. Required for accurate and efficient protein synthesis under certain stress conditions. May act as a fidelity factor of the translation reaction, by catalyzing a one-codon backward translocation of tRNAs on improperly translocated ribosomes. Back-translocation proceeds from a post-translocation (POST) complex to a pre-translocation (PRE) complex, thus giving elongation factor G a second chance to translocate the tRNAs correctly. Binds to ribosomes in a GTP-dependent manner. This is Elongation factor 4 from Burkholderia vietnamiensis (strain G4 / LMG 22486) (Burkholderia cepacia (strain R1808)).